We begin with the raw amino-acid sequence, 419 residues long: Lipid II:glycine glycyltransferase (419 aa).

The protein belongs to the FemABX family.

The protein resides in the cytoplasm. It catalyses the reaction beta-D-GlcNAc-(1-&gt;4)-Mur2Ac(oyl-L-Ala-D-isoglutaminyl-L-Lys-D-Ala-D-Ala)-di-trans,octa-cis-undecaprenyl diphosphate + glycyl-tRNA(Gly) = beta-D-GlcNAc-(1-&gt;4)-Mur2Ac(oyl-L-Ala-D-isoglutaminyl-L-Lys-(N(6)-Gly)-D-Ala-D-Ala)-di-trans,octa-cis-undecaprenyl diphosphate + tRNA(Gly) + H(+). Its function is as follows. Catalyzes the incorporation of amino acid(s) into the interchain peptide bridge of peptidoglycan, using aminoacyl-tRNA as amino acid donor. This Staphylococcus haemolyticus (strain JCSC1435) protein is Lipid II:glycine glycyltransferase (femX).